Here is a 92-residue protein sequence, read N- to C-terminus: Phosphoribosyl-ATP pyrophosphatase (92 aa).

This sequence belongs to the PRA-PH family.

It localises to the cytoplasm. The enzyme catalyses 1-(5-phospho-beta-D-ribosyl)-ATP + H2O = 1-(5-phospho-beta-D-ribosyl)-5'-AMP + diphosphate + H(+). It participates in amino-acid biosynthesis; L-histidine biosynthesis; L-histidine from 5-phospho-alpha-D-ribose 1-diphosphate: step 2/9. The protein is Phosphoribosyl-ATP pyrophosphatase of Leptospira borgpetersenii serovar Hardjo-bovis (strain JB197).